The primary structure comprises 621 residues: 1,4-alpha-glucan branching enzyme GlgB (621 aa).

The active-site Nucleophile is the Asp-302. Catalysis depends on Glu-355, which acts as the Proton donor.

Belongs to the glycosyl hydrolase 13 family. GlgB subfamily. Monomer.

It carries out the reaction Transfers a segment of a (1-&gt;4)-alpha-D-glucan chain to a primary hydroxy group in a similar glucan chain.. It functions in the pathway glycan biosynthesis; glycogen biosynthesis. Its function is as follows. Catalyzes the formation of the alpha-1,6-glucosidic linkages in glycogen by scission of a 1,4-alpha-linked oligosaccharide from growing alpha-1,4-glucan chains and the subsequent attachment of the oligosaccharide to the alpha-1,6 position. The protein is 1,4-alpha-glucan branching enzyme GlgB of Dechloromonas aromatica (strain RCB).